A 161-amino-acid polypeptide reads, in one-letter code: ATP synthase subunit b (161 aa).

The helical transmembrane segment at 10 to 29 (SVIQLMSFFLLLYILKKFLY) threads the bilayer.

This sequence belongs to the ATPase B chain family. As to quaternary structure, F-type ATPases have 2 components, F(1) - the catalytic core - and F(0) - the membrane proton channel. F(1) has five subunits: alpha(3), beta(3), gamma(1), delta(1), epsilon(1). F(0) has three main subunits: a(1), b(2) and c(10-14). The alpha and beta chains form an alternating ring which encloses part of the gamma chain. F(1) is attached to F(0) by a central stalk formed by the gamma and epsilon chains, while a peripheral stalk is formed by the delta and b chains.

It is found in the cell inner membrane. Functionally, f(1)F(0) ATP synthase produces ATP from ADP in the presence of a proton or sodium gradient. F-type ATPases consist of two structural domains, F(1) containing the extramembraneous catalytic core and F(0) containing the membrane proton channel, linked together by a central stalk and a peripheral stalk. During catalysis, ATP synthesis in the catalytic domain of F(1) is coupled via a rotary mechanism of the central stalk subunits to proton translocation. In terms of biological role, component of the F(0) channel, it forms part of the peripheral stalk, linking F(1) to F(0). The chain is ATP synthase subunit b from Thermosipho melanesiensis (strain DSM 12029 / CIP 104789 / BI429).